Reading from the N-terminus, the 287-residue chain is Protease HtpX (287 aa).

A run of 2 helical transmembrane segments spans residues 4 to 24 and 36 to 56; these read VMLF…VLNI and LSGL…ISLM. His-143 is a binding site for Zn(2+). Residue Glu-144 is part of the active site. Residue His-147 participates in Zn(2+) binding. 2 helical membrane passes run 158–178 and 192–212; these read LMQG…ANIV and MVYF…ASFI. Glu-221 is a binding site for Zn(2+).

The protein belongs to the peptidase M48B family. The cofactor is Zn(2+).

It is found in the cell inner membrane. The chain is Protease HtpX from Vibrio atlanticus (strain LGP32) (Vibrio splendidus (strain Mel32)).